Reading from the N-terminus, the 272-residue chain is 2-dehydro-3-deoxyphosphooctonate aldolase (272 aa).

The protein belongs to the KdsA family.

It localises to the cytoplasm. It catalyses the reaction D-arabinose 5-phosphate + phosphoenolpyruvate + H2O = 3-deoxy-alpha-D-manno-2-octulosonate-8-phosphate + phosphate. The protein operates within carbohydrate biosynthesis; 3-deoxy-D-manno-octulosonate biosynthesis; 3-deoxy-D-manno-octulosonate from D-ribulose 5-phosphate: step 2/3. It functions in the pathway bacterial outer membrane biogenesis; lipopolysaccharide biosynthesis. The chain is 2-dehydro-3-deoxyphosphooctonate aldolase from Trichlorobacter lovleyi (strain ATCC BAA-1151 / DSM 17278 / SZ) (Geobacter lovleyi).